The chain runs to 207 residues: Glycerol-3-phosphate acyltransferase (207 aa).

Transmembrane regions (helical) follow at residues 4–24, 58–78, 86–106, 120–140, and 162–182; these read VVATVIFALAAYLIGSISFAV, ILTLLGDAAKGGLAVWLAQWL, ETGIALVVIAVFLGHLFPVFH, ILLALNVWLGLATLATWLIIA, and VLMNGFDWIAGAVALMAVLLI.

This sequence belongs to the PlsY family. Probably interacts with PlsX.

The protein localises to the cell inner membrane. It carries out the reaction an acyl phosphate + sn-glycerol 3-phosphate = a 1-acyl-sn-glycero-3-phosphate + phosphate. It participates in lipid metabolism; phospholipid metabolism. Functionally, catalyzes the transfer of an acyl group from acyl-phosphate (acyl-PO(4)) to glycerol-3-phosphate (G3P) to form lysophosphatidic acid (LPA). This enzyme utilizes acyl-phosphate as fatty acyl donor, but not acyl-CoA or acyl-ACP. The chain is Glycerol-3-phosphate acyltransferase from Ralstonia pickettii (strain 12J).